A 357-amino-acid polypeptide reads, in one-letter code: N-acetyl-gamma-glutamyl-phosphate reductase (357 aa).

C160 is an active-site residue.

Belongs to the NAGSA dehydrogenase family. Type 1 subfamily.

It is found in the cytoplasm. The catalysed reaction is N-acetyl-L-glutamate 5-semialdehyde + phosphate + NADP(+) = N-acetyl-L-glutamyl 5-phosphate + NADPH + H(+). It participates in amino-acid biosynthesis; L-arginine biosynthesis; N(2)-acetyl-L-ornithine from L-glutamate: step 3/4. Functionally, catalyzes the NADPH-dependent reduction of N-acetyl-5-glutamyl phosphate to yield N-acetyl-L-glutamate 5-semialdehyde. This is N-acetyl-gamma-glutamyl-phosphate reductase from Prochlorococcus marinus (strain MIT 9313).